A 125-amino-acid polypeptide reads, in one-letter code: Alpha-endosulfine (125 aa).

A compositionally biased stretch (basic and acidic residues) spans 1–37 (MSDKYIGDSHLEETGEEKQDSQEKEAVTPEKAEEQKL). The segment at 1-52 (MSDKYIGDSHLEETGEEKQDSQEKEAVTPEKAEEQKLKAKYPNLGQKPGGSD) is disordered. Thr-28 carries the post-translational modification Phosphothreonine; by CDK2. At Ser-67 the chain carries Phosphoserine; by GWL. The disordered stretch occupies residues 86–107 (GPDKNLVTGDHIPTPQDLPQRK). Thr-99 bears the Phosphothreonine; by CDK2 mark. At Ser-109 the chain carries Phosphoserine; by PKA.

This sequence belongs to the endosulfine family. As to quaternary structure, interacts (when phosphorylated at Ser-67) with ppp2r2d. Phosphorylation at Ser-67 by gwl during mitosis is essential for interaction with PPP2R2D (PR55-delta) and subsequent inactivation of PP2A. Phosphorylated by PKA.

The protein localises to the cytoplasm. Functionally, protein phosphatase inhibitor that specifically inhibits protein phosphatase 2A (PP2A) during mitosis. When phosphorylated at Ser-67 during mitosis, specifically interacts with ppp2r2d (PR55-delta) and inhibits its activity, leading to inactivation of PP2A, an essential condition to keep cyclin-B1-CDK1 activity high during M phase. The polypeptide is Alpha-endosulfine (ensa) (Xenopus laevis (African clawed frog)).